A 223-amino-acid chain; its full sequence is Ribose-5-phosphate isomerase A (223 aa).

Substrate-binding positions include 26-29, 82-85, and 95-98; these read TGST, DGAD, and KGGG. E104 (proton acceptor) is an active-site residue. K122 lines the substrate pocket.

The protein belongs to the ribose 5-phosphate isomerase family. As to quaternary structure, homodimer.

The catalysed reaction is aldehydo-D-ribose 5-phosphate = D-ribulose 5-phosphate. It participates in carbohydrate degradation; pentose phosphate pathway; D-ribose 5-phosphate from D-ribulose 5-phosphate (non-oxidative stage): step 1/1. Functionally, catalyzes the reversible conversion of ribose-5-phosphate to ribulose 5-phosphate. The sequence is that of Ribose-5-phosphate isomerase A from Streptococcus agalactiae serotype III (strain NEM316).